The sequence spans 549 residues: Glucose-6-phosphate isomerase (549 aa).

3 positions are modified to N6-acetyllysine: Lys-80, Lys-228, and Lys-234. The active-site Proton donor is the Glu-355. Catalysis depends on residues His-386 and Lys-514.

Belongs to the GPI family.

It localises to the cytoplasm. The enzyme catalyses alpha-D-glucose 6-phosphate = beta-D-fructose 6-phosphate. It participates in carbohydrate biosynthesis; gluconeogenesis. The protein operates within carbohydrate degradation; glycolysis; D-glyceraldehyde 3-phosphate and glycerone phosphate from D-glucose: step 2/4. In terms of biological role, catalyzes the reversible isomerization of glucose-6-phosphate to fructose-6-phosphate. This Escherichia coli (strain SE11) protein is Glucose-6-phosphate isomerase.